The following is a 556-amino-acid chain: Arginine--tRNA ligase (556 aa).

The 'HIGH' region motif lies at 132 to 142 (ANPTGDLHLGH).

It belongs to the class-I aminoacyl-tRNA synthetase family. Monomer.

Its subcellular location is the cytoplasm. It carries out the reaction tRNA(Arg) + L-arginine + ATP = L-arginyl-tRNA(Arg) + AMP + diphosphate. The polypeptide is Arginine--tRNA ligase (Listeria monocytogenes serotype 4b (strain CLIP80459)).